The following is a 466-amino-acid chain: Asparagine--tRNA ligase (466 aa).

This sequence belongs to the class-II aminoacyl-tRNA synthetase family. In terms of assembly, homodimer.

The protein localises to the cytoplasm. The enzyme catalyses tRNA(Asn) + L-asparagine + ATP = L-asparaginyl-tRNA(Asn) + AMP + diphosphate + H(+). The protein is Asparagine--tRNA ligase of Photorhabdus laumondii subsp. laumondii (strain DSM 15139 / CIP 105565 / TT01) (Photorhabdus luminescens subsp. laumondii).